The sequence spans 570 residues: Enhancer of polycomb-like protein 1 (570 aa).

Positions 541-570 (ALNNLNSGQTSGQTMGSNPGPGAIAPTPET) are disordered. Over residues 543-557 (NNLNSGQTSGQTMGS) the composition is skewed to polar residues.

Belongs to the enhancer of polycomb family. In terms of assembly, component of the NuA4 histone acetyltransferase complex.

It localises to the nucleus. Its function is as follows. Component of the NuA4 histone acetyltransferase complex which is involved in transcriptional activation of selected genes principally by acetylation of nucleosomal histone H4 and H2A. The NuA4 complex is also involved in DNA repair. Involved in gene silencing by neighboring heterochromatin, blockage of the silencing spreading along the chromosome, and required for cell cycle progression through G2/M. This is Enhancer of polycomb-like protein 1 (epl1) from Emericella nidulans (strain FGSC A4 / ATCC 38163 / CBS 112.46 / NRRL 194 / M139) (Aspergillus nidulans).